Here is a 374-residue protein sequence, read N- to C-terminus: MHNESPIIRRKSTRIYVGKVPIGDGAPITVQSMTNTKTTDVAATVAQIKALERVGVDIVRVSVPTMDAAEAFKLIKQQSNVPLVADIHFDYRIALKVAEYGVDCLRINPGNIGSEERIRSVVDCARHHNIPIRIGINGGSLEKDIQEKYGEPTPEALLESAMRHVDILDRLNFDQFKVSVKASDVYLAVNSYRLLAKQINNPLHLGITEAGGARSGSVKSAIGLGLLLSEGIGDTLRISLAADPVEEVKVGFDILKSLRIRSRGINFIACPTCSRQEFDVIGTVNALEQRLEDLITPMDVSIIGCVVNGPGEALVSTIGVTGARNHSGFYEDGVRQRERFDNEKMIDQLEAKIRAKASMLDANNRIVINMLEEK.

The [4Fe-4S] cluster site is built by Cys270, Cys273, Cys305, and Glu312.

This sequence belongs to the IspG family. [4Fe-4S] cluster serves as cofactor.

It catalyses the reaction (2E)-4-hydroxy-3-methylbut-2-enyl diphosphate + oxidized [flavodoxin] + H2O + 2 H(+) = 2-C-methyl-D-erythritol 2,4-cyclic diphosphate + reduced [flavodoxin]. It participates in isoprenoid biosynthesis; isopentenyl diphosphate biosynthesis via DXP pathway; isopentenyl diphosphate from 1-deoxy-D-xylulose 5-phosphate: step 5/6. Its function is as follows. Converts 2C-methyl-D-erythritol 2,4-cyclodiphosphate (ME-2,4cPP) into 1-hydroxy-2-methyl-2-(E)-butenyl 4-diphosphate. The protein is 4-hydroxy-3-methylbut-2-en-1-yl diphosphate synthase (flavodoxin) of Yersinia enterocolitica serotype O:8 / biotype 1B (strain NCTC 13174 / 8081).